Consider the following 116-residue polypeptide: NADH-ubiquinone oxidoreductase chain 3 (116 aa).

3 helical membrane-spanning segments follow: residues 3–23, 56–76, and 85–105; these read LLMTIITITALLSTILAIVSF, FFLIAILFLLFDLEIALLLPL, and PLLTFTWATAVLFLLTLGLIY.

The protein belongs to the complex I subunit 3 family.

It localises to the mitochondrion membrane. It carries out the reaction a ubiquinone + NADH + 5 H(+)(in) = a ubiquinol + NAD(+) + 4 H(+)(out). Its function is as follows. Core subunit of the mitochondrial membrane respiratory chain NADH dehydrogenase (Complex I) that is believed to belong to the minimal assembly required for catalysis. Complex I functions in the transfer of electrons from NADH to the respiratory chain. The immediate electron acceptor for the enzyme is believed to be ubiquinone. The polypeptide is NADH-ubiquinone oxidoreductase chain 3 (MT-ND3) (Paralichthys olivaceus (Bastard halibut)).